A 23-amino-acid chain; its full sequence is Dermaseptin III-like peptide (23 aa).

In terms of tissue distribution, expressed by the skin glands.

The protein resides in the secreted. Its function is as follows. Possesses a potent antimicrobial activity against bacteria, fungi and protozoa. Probably acts by disturbing membrane functions with its amphipathic structure. The polypeptide is Dermaseptin III-like peptide (Phyllomedusa burmeisteri (Brazilian common walking leaf frog)).